The primary structure comprises 145 residues: NADH-quinone oxidoreductase subunit A 1 (145 aa).

3 helical membrane passes run 18-38 (ILPLGLYVAATVLLIGILLLA), 71-91 (VPFYLVAIFFIVFDVEAVFIF), and 104-124 (GLIHITAFIIVLLLGLVWLWL).

This sequence belongs to the complex I subunit 3 family. In terms of assembly, NDH-1 is composed of 14 different subunits. Subunits NuoA, H, J, K, L, M, N constitute the membrane sector of the complex.

It localises to the cell inner membrane. It carries out the reaction a quinone + NADH + 5 H(+)(in) = a quinol + NAD(+) + 4 H(+)(out). Its function is as follows. NDH-1 shuttles electrons from NADH, via FMN and iron-sulfur (Fe-S) centers, to quinones in the respiratory chain. The immediate electron acceptor for the enzyme in this species is believed to be ubiquinone. Couples the redox reaction to proton translocation (for every two electrons transferred, four hydrogen ions are translocated across the cytoplasmic membrane), and thus conserves the redox energy in a proton gradient. The chain is NADH-quinone oxidoreductase subunit A 1 from Geotalea uraniireducens (strain Rf4) (Geobacter uraniireducens).